A 101-amino-acid chain; its full sequence is Large ribosomal subunit protein uL6m (101 aa).

Belongs to the universal ribosomal protein uL6 family.

It is found in the mitochondrion. This is Large ribosomal subunit protein uL6m (RPL6) from Marchantia polymorpha (Common liverwort).